We begin with the raw amino-acid sequence, 392 residues long: Elongation factor Tu 2 (392 aa).

In terms of domain architecture, tr-type G spans 10–201 (KPHVNIGTIG…AVDSYIPTPE (192 aa)). The interval 19 to 26 (GHVDHGKT) is G1. 19–26 (GHVDHGKT) is a binding site for GTP. Threonine 26 provides a ligand contact to Mg(2+). Positions 55-59 (GITIS) are G2. Positions 76–79 (DCPG) are G3. GTP-binding positions include 76–80 (DCPGH) and 131–134 (NKVD). Residues 131 to 134 (NKVD) form a G4 region. Positions 169-171 (SAL) are G5.

This sequence belongs to the TRAFAC class translation factor GTPase superfamily. Classic translation factor GTPase family. EF-Tu/EF-1A subfamily. Monomer.

It localises to the cytoplasm. It carries out the reaction GTP + H2O = GDP + phosphate + H(+). Its function is as follows. GTP hydrolase that promotes the GTP-dependent binding of aminoacyl-tRNA to the A-site of ribosomes during protein biosynthesis. In Rhizobium etli (strain ATCC 51251 / DSM 11541 / JCM 21823 / NBRC 15573 / CFN 42), this protein is Elongation factor Tu 2.